The sequence spans 287 residues: ATP synthase gamma chain (287 aa).

It belongs to the ATPase gamma chain family. In terms of assembly, F-type ATPases have 2 components, CF(1) - the catalytic core - and CF(0) - the membrane proton channel. CF(1) has five subunits: alpha(3), beta(3), gamma(1), delta(1), epsilon(1). CF(0) has three main subunits: a, b and c.

Its subcellular location is the cell membrane. Functionally, produces ATP from ADP in the presence of a proton gradient across the membrane. The gamma chain is believed to be important in regulating ATPase activity and the flow of protons through the CF(0) complex. The protein is ATP synthase gamma chain of Halothermothrix orenii (strain H 168 / OCM 544 / DSM 9562).